The sequence spans 351 residues: Translation initiation factor eIF2B subunit beta (351 aa).

This sequence belongs to the eIF-2B alpha/beta/delta subunits family. Component of the translation initiation factor 2B (eIF2B) complex which is a heterodecamer of two sets of five different subunits: alpha, beta, gamma, delta and epsilon. Subunits alpha, beta and delta comprise a regulatory subcomplex and subunits epsilon and gamma comprise a catalytic subcomplex. Within the complex, the hexameric regulatory complex resides at the center, with the two heterodimeric catalytic subcomplexes bound on opposite sides.

The protein resides in the cytoplasm. The protein localises to the cytosol. With respect to regulation, activated by the chemical integrated stress response (ISR) inhibitor ISRIB which stimulates guanine nucleotide exchange factor activity for both phosphorylated and unphosphorylated eIF2. In terms of biological role, acts as a component of the translation initiation factor 2B (eIF2B) complex, which catalyzes the exchange of GDP for GTP on eukaryotic initiation factor 2 (eIF2) gamma subunit. Its guanine nucleotide exchange factor activity is repressed when bound to eIF2 complex phosphorylated on the alpha subunit, thereby limiting the amount of methionyl-initiator methionine tRNA available to the ribosome and consequently global translation is repressed. In Rattus norvegicus (Rat), this protein is Translation initiation factor eIF2B subunit beta (Eif2b2).